A 1166-amino-acid polypeptide reads, in one-letter code: MEISDQNQYIPYNCLNNPESEIFNARNSNFGLVSQVSSGLTRFLLEAAVPEAGFALGLFDIIWGALGVDQWSLFLRQIEQLIRQEITELERNRATAILTGLSSSYNLYVEALREWENDPNNPASQERVRTRFRLTDDAIVTGLPTLAIRNLEVVNLSVYTQAANLHLSLLRDAVYFGERWGLTQANIEDLYTRLTSNIQEYSDHCARWYNQGLNEIGGISRRYLDFQRDLTISVLDIVALFPNYDIRTYPIPTQSQLTREIYTSPVVAGNINFGLSIANVLRAPHLMDFIDRIVIYTNSVRSTPYWAGHEVISRRTGQGQGNEIRFPLYGVAANAEPPVTIRPTGFTDEQRQWYRARSRVVSFRSSGQDFSLVDAVGFLTIFSAVSIYRNGFGFNTDTIDEIPIEGTDPFTGYSHRLCHVGFLASSPFISQYARAPIFSWTHRSATLTNTIAPDVITQIPLVKAFNLHSGATIVKGPGFTGGDILRRTNVGSFGDMRVNITAPLSQRYRVRIRYASTTDLQFYTNINGTTINIGNFSSTMDSGDDLQYGRFRVAGFTTPFTFSDANSTFTIGAFGFSPNNEVYIDRIEFVPAEVTFEAEYDLEKAQKAVNALFTSSNQIGLKTDVTDYHIDKVSNLVECLSDEFCLDEKRELSEKVKHAKRLSDERNLLQDPNFRGINRQPDRGWRGSTDITIQGGDDVFKENYVTLPGTFDGCYPTYLYQKIDESKLKVYTRYQLRGYIEDSQDLEIYLIRYNAKHETVNVPGTGSLWPLSAQSPIGKCGEPNRCAPHLEWNPDLDCSCRNGEKCAHHSHHFSLDIDVGCTDLNEDLGVWVIFKIKTQDGHARLGNLEFLEEKPLLGEALARVKRAEKKWRDKREKLELETNIVYKEAKESVDALFVNSQYDQLQADTNIAMIHAADKRVHSIREAYLPELSVIPGVNAAIFEELEGRIFTAFSLYDARNVIKNGDFNNGLSCWNVKGHVDVEEQNNHRSVLVVPEWEAEVSQEVRVCPGRGYILRVTAYKEGYGEGCVTIHEIENNTDELKFSNCVEEEVYPNNTVTCNDYTANQEEYKGAYTSHNRGYDEAYGNNPSVPADYTPVYEEKAYTDGRRENPCESNRGYGDYTPLPAGYVTKELEYFPETDKVWIEIGETEGTFIVESVELLLMEE.

This sequence belongs to the delta endotoxin family.

Functionally, promotes colloidosmotic lysis by binding to the midgut epithelial cells of insects. The protein is Pesticidal crystal protein Cry1Ga (cry1Ga) of Bacillus thuringiensis.